Consider the following 360-residue polypeptide: Lipid-A-disaccharide synthase (360 aa).

It belongs to the LpxB family.

The enzyme catalyses a lipid X + a UDP-2-N,3-O-bis[(3R)-3-hydroxyacyl]-alpha-D-glucosamine = a lipid A disaccharide + UDP + H(+). The protein operates within bacterial outer membrane biogenesis; LPS lipid A biosynthesis. Functionally, condensation of UDP-2,3-diacylglucosamine and 2,3-diacylglucosamine-1-phosphate to form lipid A disaccharide, a precursor of lipid A, a phosphorylated glycolipid that anchors the lipopolysaccharide to the outer membrane of the cell. This chain is Lipid-A-disaccharide synthase, found in Helicobacter acinonychis (strain Sheeba).